The following is a 154-amino-acid chain: MTTCSICNESEIKYKCPKCSFPYCSLPCWKIHQSQCETVNDNNTTTFKGVKEPLNPPEPSPNVIYVNGRIPSLAEEALPSESLLESIVEDPSIKNLIESNAELLHIMKELVNLDREEEGSVPLKTLDAIQQQRLHNPSFEKLASMILEKYYAQK.

Zn(2+) is bound by residues Cys-4, Cys-7, Cys-16, Cys-19, Cys-24, Cys-28, His-32, and Cys-36. The HIT-type zinc-finger motif lies at 4–36 (CSICNESEIKYKCPKCSFPYCSLPCWKIHQSQC).

This is an uncharacterized protein from Schizosaccharomyces pombe (strain 972 / ATCC 24843) (Fission yeast).